Consider the following 452-residue polypeptide: Glucose-6-phosphate isomerase (452 aa).

Residue Glu290 is the Proton donor of the active site. Residues His311 and Lys425 contribute to the active site.

This sequence belongs to the GPI family.

Its subcellular location is the cytoplasm. The enzyme catalyses alpha-D-glucose 6-phosphate = beta-D-fructose 6-phosphate. It participates in carbohydrate biosynthesis; gluconeogenesis. It functions in the pathway carbohydrate degradation; glycolysis; D-glyceraldehyde 3-phosphate and glycerone phosphate from D-glucose: step 2/4. In terms of biological role, catalyzes the reversible isomerization of glucose-6-phosphate to fructose-6-phosphate. This is Glucose-6-phosphate isomerase from Limosilactobacillus reuteri (strain DSM 20016) (Lactobacillus reuteri).